We begin with the raw amino-acid sequence, 2715 residues long: Teneurin-3 (2715 aa).

Disordered regions lie at residues 1-38 (MDVKERRPYCSLTKSRREKERRYTNSSADNEECRVPTQ) and 142-223 (GRSS…AALP). In terms of domain architecture, Teneurin N-terminal spans 1–309 (MDVKERRPYC…KSSKYCSWRC (309 aa)). Residues 1–310 (MDVKERRPYC…SSKYCSWRCT (310 aa)) lie on the Cytoplasmic side of the membrane. Residues 142 to 153 (GRSSCLSSRSNS) are compositionally biased toward low complexity. The span at 159 to 168 (DTEHENRSDS) shows a compositional bias: basic and acidic residues. A compositionally biased stretch (polar residues) spans 171 to 182 (EQPSNNPGQPTL). Residues 201-213 (TSLNRNSLTNRRN) show a composition bias toward low complexity. A helical membrane pass occupies residues 311–331 (ALCAVGVSVLLAILLSYFIAM). At 332–2715 (HLFGLNWHLQ…FLRQSEIGKR (2384 aa)) the chain is on the extracellular side. Residues Asn345, Asn380, and Asn419 are each glycosylated (N-linked (GlcNAc...) asparagine). EGF-like domains lie at 514–545 (SVVECPRNCHGNGECVSGTCHCFPGFLGPDCS), 546–576 (RAACPVLCSGNGQYSKGRCLCFSGWKGTECD), 578–610 (PTTQCIDPQCGGRGICIMGSCACNSGYKGENCE), 611–642 (EADCLDPGCSNHGVCIHGECHCNPGWGGSNCE), 644–677 (LKTMCADQCSGHGTYLQESGSCTCDPNWTGPDCS), 678–709 (NEICSVDCGSHGVCMGGSCRCEEGWTGPACNQ), 710–739 (RACHPRCAEHGTCKDGKCECSQGWNGEHCT), and 740–783 (IAHY…AGCD). Intrachain disulfides connect Cys518–Cys528, Cys522–Cys533, Cys535–Cys544, Cys553–Cys564, Cys566–Cys575, Cys582–Cys593, Cys587–Cys598, Cys600–Cys609, Cys614–Cys625, Cys619–Cys630, Cys632–Cys641, Cys652–Cys665, Cys667–Cys676, Cys681–Cys691, Cys685–Cys696, Cys698–Cys707, Cys712–Cys722, Cys716–Cys727, Cys729–Cys738, Cys752–Cys762, Cys756–Cys771, and Cys773–Cys782. N-linked (GlcNAc...) asparagine glycosylation occurs at Asn670. Residues Asn869 and Asn892 are each glycosylated (N-linked (GlcNAc...) asparagine). The NHL 1 repeat unit spans residues 1181–1209 (LLAPVALACGIDGSLYVGDFNYVRRIFPS). Asn1211 is a glycosylation site (N-linked (GlcNAc...) asparagine). NHL repeat units follow at residues 1216 to 1260 (LELR…PKSL), 1286 to 1330 (ARCG…NGII), 1347 to 1387 (CDTS…ITEN), 1418 to 1445 (LESATAIAVSYSGVLYITETDEKKINRI), and 1474 to 1517 (CYQS…VSKN). The stretch at 1527 to 1546 (YEVASPTDQELYIFDINGTH) is one YD 1 repeat. Asn1543 and Asn1560 each carry an N-linked (GlcNAc...) asparagine glycan. 3 YD repeats span residues 1563–1583 (YSNDNDVTAVTDSNGNTLRIR), 1626–1645 (YHGNSGLLATKSDETGWTTF), and 1646–1668 (FDYDSEGRLTNVTFPTGVVTNLH). Asn1656, Asn1693, Asn1751, and Asn1836 each carry an N-linked (GlcNAc...) asparagine glycan. YD repeat units follow at residues 1839–1858 (YSSTGQIASIQRGTTSEKVD), 1880–1898 (YLEKSMVLLLHSQRQYIFE), 1899–1919 (YDMWDRLSAITMPSVARHTMQ), 1926–1943 (YYRNIYNPPESNASIITD), 1944–1965 (YNEEGLLLQTAFLGTSRRVLFK), 1966–1983 (YRRQTRLSEILYDSTRVS), 1986–2006 (YDETAGVLKTVNLQSDGFICT), 2009–2029 (YRQIGPLIDRQIFRFSEDGMV), 2037–2056 (YDNSFRVTSMQGVINETPLP), 2062–2079 (FDDISGKVEQFGKFGVIY), 2080–2106 (YDINQIISTAVMTYTKHFDAHGRIKEI), 2108–2121 (YEIFRSLMYWITIQ), 2122–2145 (YDNMGRVTKREIKIGPFANTTKYA), 2148–2168 (YDVDGQLQTVYLNEKIMWRYN), 2169–2189 (YDLNGNLHLLNPSSSARLTPL), 2191–2211 (YDLRDRITRLGDVQYRLDEDG), 2223–2243 (YSSKGLLTRVYSKGSGWTVIY), and 2245–2265 (YDGLGRRVSSKTSLGQHLQFF). The N-linked (GlcNAc...) asparagine glycan is linked to Asn1937. Asn2140 carries an N-linked (GlcNAc...) asparagine glycan. Asn2280 carries an N-linked (GlcNAc...) asparagine glycan. One copy of the YD 23 repeat lies at 2291–2332 (YDLQGHLFAMEISSGDEFYIASDNTGTPLAVFSSNGLMLKQT). An N-linked (GlcNAc...) asparagine glycan is attached at Asn2592.

This sequence belongs to the tenascin family. Teneurin subfamily. Homodimer; disulfide-linked; to mediate homophilic cell adhesion. Most isoforms (isoform-type A and type-B) can mediate homophilic interaction. Heterodimer with either TENM1 or TENM2. May also form heterodimer with TENM4. Isoform A0B0: Does not form homodimer to mediate homophilic cell adhesion. Isoform A0B0: Heterodimer with ADGRL3. In brain, expressed in highly specific regions of the postnatal brain: expressed in restricted domains of the developing hippocampal region, including proximal CA1, distal subiculum, and medial entorhinal cortex (at protein level). Expression matches with topographic connectivity between entorhinal cortex, CA1, and subiculum (at protein level). Also specifically expressed in subregions of the presubiculum, parasubiculum, medial mammillary nucleus and anteroventral thalamic nucleus that are topographically connected with subiculum or entorhinal cortex (at protein level). Expressed in neurons of the developing visual pathway (at protein level). Expressed in the dorsal and ventral lateral geniculate nucleus (dLGN and vLGN) and optic tract at birth. Expressed in ipsilateral retinal axons of terminal zones (TZs) in the developing superior colliculus (SC) throughout the first postnatal week. Expressed in the layer V of the visual caudal cortex. Expressed in the femoral and mandibular condylar cartilages. Strongly expressed in fibrous and proliferating chondrocytes. Poorly expressed in mature chondrocytes. Not expressed in hypertrophic chondrocytes.

Its subcellular location is the cell membrane. The protein localises to the cell projection. It localises to the axon. In terms of biological role, involved in neural development by regulating the establishment of proper connectivity within the nervous system. Acts in both pre- and postsynaptic neurons in the hippocampus to control the assembly of a precise topographic projection: required in both CA1 and subicular neurons for the precise targeting of proximal CA1 axons to distal subiculum, probably by promoting homophilic cell adhesion. Promotes homophilic adhesion in a splicing isoform-dependent manner: most isoforms (isoform-type A and type-B) can mediate homophilic interaction. Promotes axon guidance. Required for proper dendrite morphogenesis and axon targeting in the vertebrate visual system, thereby playing a key role in the development of the visual pathway. Regulates the formation in ipsilateral retinal mapping to both the dorsal lateral geniculate nucleus (dLGN) and the superior colliculus (SC). May also be involved in the differentiation of the fibroblast-like cells in the superficial layer of mandibular condylar cartilage into chondrocytes. The chain is Teneurin-3 from Mus musculus (Mouse).